Reading from the N-terminus, the 117-residue chain is Large ribosomal subunit protein uL18 (117 aa).

The protein belongs to the universal ribosomal protein uL18 family. As to quaternary structure, part of the 50S ribosomal subunit; part of the 5S rRNA/L5/L18/L25 subcomplex. Contacts the 5S and 23S rRNAs.

Its function is as follows. This is one of the proteins that bind and probably mediate the attachment of the 5S RNA into the large ribosomal subunit, where it forms part of the central protuberance. This Haemophilus influenzae (strain 86-028NP) protein is Large ribosomal subunit protein uL18.